A 291-amino-acid chain; its full sequence is Elongation factor Ts (291 aa).

Positions 79 to 82 (TDFV) are involved in Mg(2+) ion dislocation from EF-Tu.

This sequence belongs to the EF-Ts family.

It is found in the cytoplasm. Associates with the EF-Tu.GDP complex and induces the exchange of GDP to GTP. It remains bound to the aminoacyl-tRNA.EF-Tu.GTP complex up to the GTP hydrolysis stage on the ribosome. This is Elongation factor Ts from Anaplasma marginale (strain St. Maries).